The primary structure comprises 834 residues: Periplasmic nitrate reductase (834 aa).

A signal peptide (tat-type signal) is located at residues Met1–Ala31. In terms of domain architecture, 4Fe-4S Mo/W bis-MGD-type spans Ile43–Asp99. Cys50, Cys53, Cys57, and Cys85 together coordinate [4Fe-4S] cluster. Residues Lys87, Gln154, Asn179, Cys183, Trp216–Met223, Ser247–His251, Gly266–Asp268, Met377, Gln381, Asn487, Ser513–Asp514, Lys536, Asp563, and Thr723–Ser732 contribute to the Mo-bis(molybdopterin guanine dinucleotide) site. Trp799 serves as a coordination point for substrate. Asn807 and Lys824 together coordinate Mo-bis(molybdopterin guanine dinucleotide).

Belongs to the prokaryotic molybdopterin-containing oxidoreductase family. NasA/NapA/NarB subfamily. As to quaternary structure, component of the periplasmic nitrate reductase NapAB complex composed of NapA and NapB. Requires [4Fe-4S] cluster as cofactor. Mo-bis(molybdopterin guanine dinucleotide) serves as cofactor. Predicted to be exported by the Tat system. The position of the signal peptide cleavage has not been experimentally proven.

Its subcellular location is the periplasm. The enzyme catalyses 2 Fe(II)-[cytochrome] + nitrate + 2 H(+) = 2 Fe(III)-[cytochrome] + nitrite + H2O. Functionally, catalytic subunit of the periplasmic nitrate reductase complex NapAB. Receives electrons from NapB and catalyzes the reduction of nitrate to nitrite. The protein is Periplasmic nitrate reductase of Agrobacterium fabrum (strain C58 / ATCC 33970) (Agrobacterium tumefaciens (strain C58)).